Here is a 487-residue protein sequence, read N- to C-terminus: 26S proteasome non-ATPase regulatory subunit 3 homolog B (487 aa).

Residues 1 to 21 (MTQDVEMKDNQTPTQSVVSAP) are disordered. Residues 10 to 21 (NQTPTQSVVSAP) are compositionally biased toward polar residues. The PCI domain maps to 239-420 (CRYLFYLGKI…GCMVSKETGD (182 aa)). The disordered stretch occupies residues 452–487 (PPNTHREKESEEKRREMKQQEEELAKYMAEEDDDDF). Residues 455 to 480 (THREKESEEKRREMKQQEEELAKYMA) are compositionally biased toward basic and acidic residues.

This sequence belongs to the proteasome subunit S3 family. Component of the 19S regulatory particle (RP/PA700) lid subcomplex of the 26S proteasome. The 26S proteasome is composed of a core protease (CP), known as the 20S proteasome, capped at one or both ends by the 19S regulatory particle (RP/PA700). The RP/PA700 complex is composed of at least 17 different subunits in two subcomplexes, the base and the lid, which form the portions proximal and distal to the 20S proteolytic core, respectively. Interacts with UCH1 and UCH2. As to expression, preferentially expressed in flowers.

Its function is as follows. Acts as a regulatory subunit of the 26 proteasome which is involved in the ATP-dependent degradation of ubiquitinated proteins. The chain is 26S proteasome non-ATPase regulatory subunit 3 homolog B from Arabidopsis thaliana (Mouse-ear cress).